The primary structure comprises 96 residues: UPF0235 protein YggU (96 aa).

This sequence belongs to the UPF0235 family.

This Salmonella typhi protein is UPF0235 protein YggU.